The following is a 561-amino-acid chain: Sperm-tail PG-rich repeat-containing protein 2 (561 aa).

3 STPGR repeats span residues 21–34 (VGPGTYQVPFPKQQ), 63–72 (PGPAHYNVSQ), and 97–104 (GPGPGSYN). Positions 123–143 (PAVSRNIDIPSIPSSGKSHGY) are disordered. 7 STPGR repeats span residues 164–191 (GPAYYNPQFDYPKASLKYKGVNFGNATG), 200–210 (GPGPGQYDIIQ), 250–285 (PGPGKYNIKSEFDMIKSMSALVNSPSFIFFSETERF), 292–299 (TPAPGTYN), 334–367 (LPGPGFYDISTNIVKAQVKKPCLKKQPKTGFGSS), 421–438 (LPAPGRYDVQKSYDMSQV), and 471–481 (GPGPATYSPVL).

This is Sperm-tail PG-rich repeat-containing protein 2 (Stpg2) from Mus musculus (Mouse).